A 192-amino-acid polypeptide reads, in one-letter code: Orotate phosphoribosyltransferase (192 aa).

116-124 contacts 5-phospho-alpha-D-ribose 1-diphosphate; sequence EDIVTTGLS. Orotate contacts are provided by threonine 120 and arginine 148.

The protein belongs to the purine/pyrimidine phosphoribosyltransferase family. PyrE subfamily. As to quaternary structure, homodimer. Requires Mg(2+) as cofactor.

The enzyme catalyses orotidine 5'-phosphate + diphosphate = orotate + 5-phospho-alpha-D-ribose 1-diphosphate. It participates in pyrimidine metabolism; UMP biosynthesis via de novo pathway; UMP from orotate: step 1/2. In terms of biological role, catalyzes the transfer of a ribosyl phosphate group from 5-phosphoribose 1-diphosphate to orotate, leading to the formation of orotidine monophosphate (OMP). This is Orotate phosphoribosyltransferase from Brucella canis (strain ATCC 23365 / NCTC 10854 / RM-666).